A 220-amino-acid polypeptide reads, in one-letter code: UPF0502 protein CV_4303 (220 aa).

The protein belongs to the UPF0502 family.

The sequence is that of UPF0502 protein CV_4303 from Chromobacterium violaceum (strain ATCC 12472 / DSM 30191 / JCM 1249 / CCUG 213 / NBRC 12614 / NCIMB 9131 / NCTC 9757 / MK).